Here is a 680-residue protein sequence, read N- to C-terminus: DNA-directed RNA polymerase subunit beta' (680 aa).

Zn(2+) is bound by residues C69, C71, C87, and C90. Mg(2+)-binding residues include D489, D491, and D493.

It belongs to the RNA polymerase beta' chain family. RpoC1 subfamily. In terms of assembly, in plastids the minimal PEP RNA polymerase catalytic core is composed of four subunits: alpha, beta, beta', and beta''. When a (nuclear-encoded) sigma factor is associated with the core the holoenzyme is formed, which can initiate transcription. Mg(2+) is required as a cofactor. It depends on Zn(2+) as a cofactor.

The protein resides in the plastid. It is found in the chloroplast. It carries out the reaction RNA(n) + a ribonucleoside 5'-triphosphate = RNA(n+1) + diphosphate. In terms of biological role, DNA-dependent RNA polymerase catalyzes the transcription of DNA into RNA using the four ribonucleoside triphosphates as substrates. The protein is DNA-directed RNA polymerase subunit beta' of Capsella bursa-pastoris (Shepherd's purse).